A 72-amino-acid chain; its full sequence is Putative snRNP Sm-like protein (72 aa).

The Sm domain occupies 4–72 (RPLDILNNAL…RGDNVVYVSP (69 aa)).

It belongs to the snRNP Sm proteins family.

The protein is Putative snRNP Sm-like protein of Methanosarcina acetivorans (strain ATCC 35395 / DSM 2834 / JCM 12185 / C2A).